The sequence spans 989 residues: ATP-dependent 6-phosphofructokinase subunit alpha (989 aa).

The tract at residues 1–585 (MPEPSISALS…SYESFLSVSK (585 aa)) is N-terminal catalytic PFK domain 1. ATP-binding positions include Gly-220, 283–284 (RS), and 313–316 (GDGS). Residue Asp-314 participates in Mg(2+) binding. Beta-D-fructose 6-phosphate contacts are provided by residues 359-361 (SID), Arg-396, 403-405 (MGR), Glu-460, Arg-487, and 493-496 (HVQR). Asp-361 functions as the Proton acceptor in the catalytic mechanism. An interdomain linker region spans residues 586-599 (YDDGSYLVPESSRL). Positions 600-989 (NIAIIHVGAP…LSGRLSIRTT (390 aa)) are C-terminal regulatory PFK domain 2. Beta-D-fructose 2,6-bisphosphate is bound by residues Arg-670, 727 to 731 (TVSNN), Arg-765, 772 to 774 (QGG), Glu-832, Arg-858, 864 to 867 (HVQQ), and Arg-963.

The protein belongs to the phosphofructokinase type A (PFKA) family. ATP-dependent PFK group I subfamily. Eukaryotic two domain clade 'E' sub-subfamily. As to quaternary structure, heterododecamer of 4 alpha, 4 beta and 4 gamma chains. The gamma chain bridges the N-terminal halves of the alpha and beta subunits. The cofactor is Mg(2+).

Its subcellular location is the cytoplasm. The catalysed reaction is beta-D-fructose 6-phosphate + ATP = beta-D-fructose 1,6-bisphosphate + ADP + H(+). It functions in the pathway carbohydrate degradation; glycolysis; D-glyceraldehyde 3-phosphate and glycerone phosphate from D-glucose: step 3/4. With respect to regulation, allosterically activated by ADP, AMP, or fructose 2,6-bisphosphate, and allosterically inhibited by ATP or citrate. Catalyzes the phosphorylation of D-fructose 6-phosphate to fructose 1,6-bisphosphate by ATP, the first committing step of glycolysis. Involved in the modulation of glucose-induced microautophagy of peroxisomes independent of its ability to metabolize glucose intermediates. In Komagataella phaffii (strain GS115 / ATCC 20864) (Yeast), this protein is ATP-dependent 6-phosphofructokinase subunit alpha (PFK1).